Consider the following 273-residue polypeptide: NH(3)-dependent NAD(+) synthetase (273 aa).

Residue 47 to 54 (GISGGQDS) coordinates ATP. Aspartate 53 serves as a coordination point for Mg(2+). Arginine 139 is a deamido-NAD(+) binding site. Threonine 159 provides a ligand contact to ATP. Glutamate 164 lines the Mg(2+) pocket. The deamido-NAD(+) site is built by lysine 172 and aspartate 179. ATP contacts are provided by lysine 188 and threonine 210. 259–260 (HK) is a deamido-NAD(+) binding site.

It belongs to the NAD synthetase family. Homodimer.

The catalysed reaction is deamido-NAD(+) + NH4(+) + ATP = AMP + diphosphate + NAD(+) + H(+). The protein operates within cofactor biosynthesis; NAD(+) biosynthesis; NAD(+) from deamido-NAD(+) (ammonia route): step 1/1. Its function is as follows. Catalyzes the ATP-dependent amidation of deamido-NAD to form NAD. Uses ammonia as a nitrogen source. This Staphylococcus aureus (strain COL) protein is NH(3)-dependent NAD(+) synthetase.